Consider the following 197-residue polypeptide: ATP-dependent Clp protease proteolytic subunit 3 (197 aa).

The Nucleophile role is filled by Ser-96. His-121 is a catalytic residue.

Belongs to the peptidase S14 family. Fourteen ClpP subunits assemble into 2 heptameric rings which stack back to back to give a disk-like structure with a central cavity, resembling the structure of eukaryotic proteasomes.

The protein localises to the cytoplasm. It carries out the reaction Hydrolysis of proteins to small peptides in the presence of ATP and magnesium. alpha-casein is the usual test substrate. In the absence of ATP, only oligopeptides shorter than five residues are hydrolyzed (such as succinyl-Leu-Tyr-|-NHMec, and Leu-Tyr-Leu-|-Tyr-Trp, in which cleavage of the -Tyr-|-Leu- and -Tyr-|-Trp bonds also occurs).. Its function is as follows. Cleaves peptides in various proteins in a process that requires ATP hydrolysis. Has a chymotrypsin-like activity. Plays a major role in the degradation of misfolded proteins. The protein is ATP-dependent Clp protease proteolytic subunit 3 of Prochlorococcus marinus (strain MIT 9313).